We begin with the raw amino-acid sequence, 383 residues long: Geranylgeranyl pyrophosphate synthase esdpD (383 aa).

Positions 88, 91, and 120 each coordinate isopentenyl diphosphate. 2 residues coordinate Mg(2+): Asp-150 and Asp-154. Dimethylallyl diphosphate is bound at residue Arg-159. Arg-160 is an isopentenyl diphosphate binding site. Dimethylallyl diphosphate contacts are provided by Lys-237, Thr-238, and Gln-271. Asp-274 contributes to the Mg(2+) binding site. Positions 278, 288, and 298 each coordinate dimethylallyl diphosphate.

It belongs to the FPP/GGPP synthase family. Mg(2+) serves as cofactor.

The enzyme catalyses isopentenyl diphosphate + dimethylallyl diphosphate = (2E)-geranyl diphosphate + diphosphate. The catalysed reaction is isopentenyl diphosphate + (2E)-geranyl diphosphate = (2E,6E)-farnesyl diphosphate + diphosphate. It catalyses the reaction isopentenyl diphosphate + (2E,6E)-farnesyl diphosphate = (2E,6E,10E)-geranylgeranyl diphosphate + diphosphate. The protein operates within secondary metabolite biosynthesis; terpenoid biosynthesis. Geranylgeranyl pyrophosphate synthase; part of the cluster that mediates the biosynthesis of shearones, diterpenoid pyrones (DPs) which are structurally diverse meroterpenoids consisting of a diterpene linked by a pyrone, and which may exhibit a range of bioactivities. Within the pathway, esdpD takes part to the biosynthesis of the molecular scaffold by providing geranylgeranyl pyrophosphate (GGPP) to the prenyltransferase esdpC for C-3 geranylgeranylation of the alpha-pyrone. The molecular scaffold is commonly biosynthesized by a series of enzymes including the non-reducing polyketide synthase (NR-PKS) esdpA that generates an alpha-pyrone; the prenyltransferase esdpC that attaches a geranylgeranyl pyrophosphate (GGPP) produced by the GGPP synthase (GGPPS) esdpD onto the pyrone unit; the FAD-dependent monooxygenase esdpE that converts an olefin on the diterpene unit into an epoxide; and the terpene cyclase esdpB that catalyzes the cyclization reactions to give the molecular backbone shearone A. In the modification steps, esdpF oxidizes the hydroxy group to a ketone at C-3 and esdpG then attaches hydroxy groups at both C-11 and C-12. After that, esdpI hydroxylates at C-20 and esdpH hydroxylates at C-6'. The ether bridge is generated by nucleophilic attack of the hydroxy group at C-20 to the carbonyl carbon at C-3. EsdpH can also functions prior to esdpI. The different combinations of these modification enzymes lead to the production of diverse shearone derivatives, shearone I being the end product of the pathway. The alpha-ketoglutarate-dependent dioxygenase esdpJ seems not to be involved in this pathway. In Penicillium shearii (Eupenicillium shearii), this protein is Geranylgeranyl pyrophosphate synthase esdpD.